A 444-amino-acid chain; its full sequence is Jacalin-related lectin 11 (444 aa).

Ala2 carries the N-acetylalanine modification. Jacalin-type lectin domains follow at residues 2–143 (ALKV…YFIK), 146–290 (SIQS…YYAP), and 298–442 (PEKL…HVTA).

It belongs to the jacalin lectin family.

The chain is Jacalin-related lectin 11 (JAL11) from Arabidopsis thaliana (Mouse-ear cress).